Reading from the N-terminus, the 224-residue chain is Octanoyltransferase (224 aa).

One can recognise a BPL/LPL catalytic domain in the interval 38–213 (AETTDEVWLL…QFVRAAGFQS (176 aa)). Substrate is bound by residues 77–84 (RGGQVTYH), 144–146 (SLG), and 157–159 (GLA). Residue Cys-175 is the Acyl-thioester intermediate of the active site.

It belongs to the LipB family.

It localises to the cytoplasm. The catalysed reaction is octanoyl-[ACP] + L-lysyl-[protein] = N(6)-octanoyl-L-lysyl-[protein] + holo-[ACP] + H(+). Its pathway is protein modification; protein lipoylation via endogenous pathway; protein N(6)-(lipoyl)lysine from octanoyl-[acyl-carrier-protein]: step 1/2. Functionally, catalyzes the transfer of endogenously produced octanoic acid from octanoyl-acyl-carrier-protein onto the lipoyl domains of lipoate-dependent enzymes. Lipoyl-ACP can also act as a substrate although octanoyl-ACP is likely to be the physiological substrate. The sequence is that of Octanoyltransferase from Hahella chejuensis (strain KCTC 2396).